Consider the following 170-residue polypeptide: Small ribosomal subunit protein eS7 (170 aa).

Belongs to the eukaryotic ribosomal protein eS7 family. In terms of assembly, component of the small ribosomal subunit.

The protein localises to the cytoplasm. The sequence is that of Small ribosomal subunit protein eS7 (RPS7) from Encephalitozoon cuniculi (strain GB-M1) (Microsporidian parasite).